The chain runs to 298 residues: Protein RKD2 (298 aa).

2 stretches are compositionally biased toward basic and acidic residues: residues 1 to 10 (MADHTTKEQK) and 81 to 102 (EQNRGDGASSEKKRENGTVKET). 2 disordered regions span residues 1-22 (MADHTTKEQKSFSFLAHSPSFD) and 73-112 (SSASWNETEQNRGDGASSEKKRENGTVKETTKKRKINERH). Positions 121 to 203 (SDITTYTTSS…KMEGEENAEK (83 aa)) constitute an RWP-RK domain. A coiled-coil region spans residues 188-222 (NVKELQKMEGEENAEKLQDALEMLEKEKRTIEDLP). Residues 241 to 279 (NHKRKKKRSLKSDQSQVPSCSSSGSVPSDESVDEAGMES) form a disordered region. Residues 252 to 269 (SDQSQVPSCSSSGSVPSD) show a composition bias toward low complexity. Residues 270–279 (ESVDEAGMES) show a composition bias toward acidic residues.

The protein resides in the nucleus. Putative transcription factor. The sequence is that of Protein RKD2 (RKD2) from Arabidopsis thaliana (Mouse-ear cress).